The sequence spans 239 residues: tRNA (guanine-N(1)-)-methyltransferase (239 aa).

S-adenosyl-L-methionine-binding positions include Gly-110 and Val-130–Leu-135.

Belongs to the RNA methyltransferase TrmD family. As to quaternary structure, homodimer.

It localises to the cytoplasm. It carries out the reaction guanosine(37) in tRNA + S-adenosyl-L-methionine = N(1)-methylguanosine(37) in tRNA + S-adenosyl-L-homocysteine + H(+). Functionally, specifically methylates guanosine-37 in various tRNAs. The protein is tRNA (guanine-N(1)-)-methyltransferase of Borrelia hermsii (strain HS1 / DAH).